The primary structure comprises 1171 residues: DNA polymerase catalytic subunit (1171 aa).

Disordered regions lie at residues 647–687 (GTPA…PFRT), 704–735 (PGGGAVSSASVGGRAAVSPSETPAEREPEPAP), and 1149–1171 (VEEEVCESERGGSGLLSSLDSSR). The span at 649-662 (PARPPETPARPPET) shows a compositional bias: pro residues. Composition is skewed to low complexity over residues 663 to 674 (PAAGPSGAAHAG) and 709 to 725 (VSSASVGGRAAVSPSET). Residues 1149-1158 (VEEEVCESER) are compositionally biased toward basic and acidic residues.

This sequence belongs to the DNA polymerase type-B family.

Its subcellular location is the host nucleus. The enzyme catalyses DNA(n) + a 2'-deoxyribonucleoside 5'-triphosphate = DNA(n+1) + diphosphate. This chain is DNA polymerase catalytic subunit (DPOL), found in Tupaia belangeri (Common tree shrew).